The primary structure comprises 145 residues: Protein BUD31 homolog 3 (145 aa).

Belongs to the BUD31 (G10) family.

Its subcellular location is the nucleus. This chain is Protein BUD31 homolog 3, found in Oryza sativa subsp. japonica (Rice).